Here is a 115-residue protein sequence, read N- to C-terminus: Large ribosomal subunit protein bL19 (115 aa).

The protein belongs to the bacterial ribosomal protein bL19 family.

This protein is located at the 30S-50S ribosomal subunit interface and may play a role in the structure and function of the aminoacyl-tRNA binding site. The polypeptide is Large ribosomal subunit protein bL19 (rplS) (Thermotoga maritima (strain ATCC 43589 / DSM 3109 / JCM 10099 / NBRC 100826 / MSB8)).